Here is a 404-residue protein sequence, read N- to C-terminus: MKITNIGAIVTPVGNSYHSGDKQSELDFIENATIYIENGKIAKITREHSSDAGDLDAEGSIVIPGLVDSHTHIIFGGNRSQEFYQRASGYTYSEILRSGNGIYKTVRDTANSSADEIFTQSMKRIADAVSHGTTTIELKTGYGLYEKEERKLLDVARKISNSGLVSTVLTYLMHVLPEGESEEAYEKYSEKILSSFRNYISFADVFCDEGAFSPNAAKAFLKFADNLGLGLKIHANEINNIGCVKACSGLNVKSFDHMIHANAEDVETIRSIGSAITLLPLTVFALDESYPDARVFIDSGVPVIIASDISPLNYNANLIFAMHLAVKYSSMKPEEALTATTINAASSLGLGEKKGTVEEGKDADIVIIDVDDYTEIPYEYGINTVKKVFHNGSLVFDRTKQFKL.

The Fe(3+) site is built by histidine 70 and histidine 72. Residues histidine 70 and histidine 72 each coordinate Zn(2+). Residues arginine 79, tyrosine 142, and histidine 174 each contribute to the 4-imidazolone-5-propanoate site. Tyrosine 142 lines the N-formimidoyl-L-glutamate pocket. Position 234 (histidine 234) interacts with Fe(3+). Histidine 234 provides a ligand contact to Zn(2+). Glutamate 237 contributes to the 4-imidazolone-5-propanoate binding site. Position 308 (aspartate 308) interacts with Fe(3+). A Zn(2+)-binding site is contributed by aspartate 308.

The protein belongs to the metallo-dependent hydrolases superfamily. HutI family. The cofactor is Zn(2+). Requires Fe(3+) as cofactor.

Its subcellular location is the cytoplasm. It carries out the reaction 4-imidazolone-5-propanoate + H2O = N-formimidoyl-L-glutamate. The protein operates within amino-acid degradation; L-histidine degradation into L-glutamate; N-formimidoyl-L-glutamate from L-histidine: step 3/3. Its function is as follows. Catalyzes the hydrolytic cleavage of the carbon-nitrogen bond in imidazolone-5-propanoate to yield N-formimidoyl-L-glutamate. It is the third step in the universal histidine degradation pathway. This Thermoplasma volcanium (strain ATCC 51530 / DSM 4299 / JCM 9571 / NBRC 15438 / GSS1) protein is Imidazolonepropionase.